Reading from the N-terminus, the 219-residue chain is Leukocyte surface antigen CD53 (219 aa).

At 2 to 11 (GMSSLKLLKY) the chain is on the cytoplasmic side. The helical transmembrane segment at 12–32 (VLFFFNFLFWVCGCCILGFGI) threads the bilayer. Residues 33–54 (HLLVQNTYGILFRNLPFLTLGN) lie on the Extracellular side of the membrane. A helical transmembrane segment spans residues 55–69 (VLVIVGSIIMVVAFL). At 70–80 (GCMGSIKENKC) the chain is on the cytoplasmic side. Residues 81–106 (LLMSFFVLLLLILLAEVTLAILLFVY) form a helical membrane-spanning segment. The Extracellular portion of the chain corresponds to 107-181 (EKKINTLVAE…KKGQAWFHSN (75 aa)). N-linked (GlcNAc...) asparagine glycosylation is found at N119, N129, and N148. The chain crosses the membrane as a helical span at residues 182-206 (FLYIGIVTICVCVIQVLGMSFALTL). At 207 to 219 (NCQIDKTSQALGL) the chain is on the cytoplasmic side.

Belongs to the tetraspanin (TM4SF) family. As to quaternary structure, interacts with SCIMP. Interacts with CD45/PTPRC. Interacts with IL7R. Interacts with RBL2 and PPP2CA. In terms of tissue distribution, spleen and thymus, B-cells, monocytes, macrophages, neutrophils, single (CD4 or CD8) positive thymocytes, peripheral T-cells.

Its subcellular location is the cell membrane. It is found in the cell junction. The protein localises to the membrane. Its function is as follows. Required for efficient formation of myofibers in regenerating muscle at the level of cell fusion. May be involved in growth regulation in hematopoietic cells. In Rattus norvegicus (Rat), this protein is Leukocyte surface antigen CD53 (Cd53).